Consider the following 174-residue polypeptide: Gamma-crystallin A (174 aa).

Beta/gamma crystallin 'Greek key' domains are found at residues 2 to 40 (GKIT…RVDS) and 41 to 83 (GCWM…RIIP). The connecting peptide stretch occupies residues 84 to 87 (HTSS). Beta/gamma crystallin 'Greek key' domains lie at 88–128 (HKLR…HVLE) and 129–171 (GCWV…RRVT).

The protein belongs to the beta/gamma-crystallin family. Monomer.

Its function is as follows. Crystallins are the dominant structural components of the vertebrate eye lens. The chain is Gamma-crystallin A (CRYGA) from Homo sapiens (Human).